The chain runs to 133 residues: Cytidine deaminase (133 aa).

Positions 3–131 constitute a CMP/dCMP-type deaminase domain; it reads VDLDWVHHKL…EILKGGFRSY (129 aa). 43–45 serves as a coordination point for substrate; that stretch reads NIE. C54 contributes to the Zn(2+) binding site. E56 functions as the Proton donor in the catalytic mechanism. C89 and C92 together coordinate Zn(2+).

Belongs to the cytidine and deoxycytidylate deaminase family. Homodimer. Zn(2+) serves as cofactor.

It carries out the reaction cytidine + H2O + H(+) = uridine + NH4(+). The enzyme catalyses 2'-deoxycytidine + H2O + H(+) = 2'-deoxyuridine + NH4(+). Functionally, this enzyme scavenges exogenous and endogenous cytidine and 2'-deoxycytidine for UMP synthesis. The chain is Cytidine deaminase (cdd) from Mycoplasma pneumoniae (strain ATCC 29342 / M129 / Subtype 1) (Mycoplasmoides pneumoniae).